We begin with the raw amino-acid sequence, 250 residues long: Acetoacetate decarboxylase 1 (250 aa).

Lys120 (schiff-base intermediate with acetoacetate) is an active-site residue.

This sequence belongs to the ADC family.

It catalyses the reaction acetoacetate + H(+) = acetone + CO2. Its function is as follows. Catalyzes the conversion of acetoacetate to acetone and carbon dioxide. The polypeptide is Acetoacetate decarboxylase 1 (Bradyrhizobium diazoefficiens (strain JCM 10833 / BCRC 13528 / IAM 13628 / NBRC 14792 / USDA 110)).